A 316-amino-acid chain; its full sequence is Cobalamin biosynthesis protein CobD (316 aa).

Helical transmembrane passes span 45-65, 78-100, 151-171, 209-229, and 291-311; these read FSPY…ALGV, PVLY…SLAF, DGVI…AMTY, LTWL…KGAL, and ISLL…FYLV.

This sequence belongs to the CobD/CbiB family.

The protein localises to the cell membrane. Its pathway is cofactor biosynthesis; adenosylcobalamin biosynthesis. Converts cobyric acid to cobinamide by the addition of aminopropanol on the F carboxylic group. The protein is Cobalamin biosynthesis protein CobD of Streptococcus sanguinis (strain SK36).